Consider the following 836-residue polypeptide: MARLGNCSLTWAALIILLLPGSLEECGHISVSAPIVHLGDPITASCIIKQNCSHLDPEPQILWRLGAELQPGGRQQRLSDGTQESIITLPHLNHTQAFLSCCLNWGNSLQILDQVELRAGYPPAIPHNLSCLMNLTTSSLICQWEPGPETHLPTSFTLKSFKSRGNCQTQGDSILDCVPKDGQSHCCIPRKHLLLYQNMGIWVQAENALGTSMSPQLCLDPMDVVKLEPPMLRTMDPSPEAAPPQAGCLQLCWEPWQPGLHINQKCELRHKPQRGEASWALVGPLPLEALQYELCGLLPATAYTLQIRCIRWPLPGHWSDWSPSLELRTTERAPTVRLDTWWRQRQLDPRTVQLFWKPVPLEEDSGRIQGYVVSWRPSGQAGAILPLCNTTELSCTFHLPSEAQEVALVAYNSAGTSRPTPVVFSESRGPALTRLHAMARDPHSLWVGWEPPNPWPQGYVIEWGLGPPSASNSNKTWRMEQNGRATGFLLKENIRPFQLYEIIVTPLYQDTMGPSQHVYAYSQEMAPSHAPELHLKHIGKTWAQLEWVPEPPELGKSPLTHYTIFWTNAQNQSFSAILNASSRGFVLHGLEPASLYHIHLMAASQAGATNSTVLTLMTLTPEGSELHIILGLFGLLLLLTCLCGTAWLCCSPNRKNPLWPSVPDPAHSSLGSWVPTIMEEDAFQLPGLGTPPITKLTVLEEDEKKPVPWESHNSSETCGLPTLVQTYVLQGDPRAVSTQPQSQSGTSDQVLYGQLLGSPTSPGPGHYLRCDSTQPLLAGLTPSPKSYENLWFQASPLGTLVTPAPSQEDDCVFGPLLNFPLLQGIRVHGMEALGSF.

The first 24 residues, 1 to 24 (MARLGNCSLTWAALIILLLPGSLE), serve as a signal peptide directing secretion. Residues 25–117 (ECGHISVSAP…SLQILDQVEL (93 aa)) form the Ig-like C2-type domain. Residues 25-627 (ECGHISVSAP…TLTPEGSELH (603 aa)) are Extracellular-facing. 2 disulfides stabilise this stretch: C26/C52 and C46/C101. N-linked (GlcNAc...) asparagine glycosylation is found at N51, N93, N128, and N134. 5 Fibronectin type-III domains span residues 125–230 (IPHN…LEPP), 233–332 (RTMD…TTER), 334–430 (PTVR…SRGP), 431–528 (ALTR…MAPS), and 530–623 (APEL…TPEG). Cystine bridges form between C131-C142, C167-C218, C177-C186, C248-C295, and C266-C309. Positions 318-322 (WSDWS) match the WSXWS motif motif. N-linked (GlcNAc...) asparagine glycosylation is found at N389, N474, N579, and N610. The chain crosses the membrane as a helical span at residues 628–650 (IILGLFGLLLLLTCLCGTAWLCC). Residues 651-836 (SPNRKNPLWP…VHGMEALGSF (186 aa)) are Cytoplasmic-facing. Positions 658-666 (LWPSVPDPA) match the Box 1 motif motif.

It belongs to the type I cytokine receptor family. Type 2 subfamily. As to quaternary structure, homodimer. The dimeric receptor binds two CSF3 molecules. Interacts with CEACAM1; down-regulates the CSF3R-STAT3 pathway through recruitment of PTPN6 that dephosphorylates CSF3R. In terms of processing, N-glycosylated. In terms of tissue distribution, one or several isoforms have been found in myelogenous leukemia cell line KG-1, leukemia U-937 cell line, in bone marrow cells, placenta, and peripheral blood granulocytes. Isoform GCSFR-2 is found only in leukemia U-937 cells. Isoform GCSFR-3 is highly expressed in placenta.

It localises to the secreted. Its subcellular location is the cell membrane. Its function is as follows. Receptor for granulocyte colony-stimulating factor (CSF3), essential for granulocytic maturation. Plays a crucial role in the proliferation, differentiation and survival of cells along the neutrophilic lineage. In addition it may function in some adhesion or recognition events at the cell surface. This is Granulocyte colony-stimulating factor receptor (CSF3R) from Homo sapiens (Human).